Here is a 103-residue protein sequence, read N- to C-terminus: MQNQRIRIRLKAFDHRLIDKSTVEIVETAKRTGAQVRGPIPLPTRKERFTVLISPHVNKDARDQYEIRTHKRLIDIVEPTDKTVDALMRLDLAAGVDVQISLG.

It belongs to the universal ribosomal protein uS10 family. Part of the 30S ribosomal subunit.

In terms of biological role, involved in the binding of tRNA to the ribosomes. This is Small ribosomal subunit protein uS10 from Blochmanniella pennsylvanica (strain BPEN).